Consider the following 283-residue polypeptide: Pantothenate synthetase (283 aa).

34–41 (MGALHDGH) is an ATP binding site. His41 acts as the Proton donor in catalysis. Gln65 is a (R)-pantoate binding site. A beta-alanine-binding site is contributed by Gln65. 152-155 (GQKD) lines the ATP pocket. Gln158 contributes to the (R)-pantoate binding site. Residues Val181 and 189-192 (MSSR) each bind ATP.

Belongs to the pantothenate synthetase family. Homodimer.

It is found in the cytoplasm. The catalysed reaction is (R)-pantoate + beta-alanine + ATP = (R)-pantothenate + AMP + diphosphate + H(+). It functions in the pathway cofactor biosynthesis; (R)-pantothenate biosynthesis; (R)-pantothenate from (R)-pantoate and beta-alanine: step 1/1. In terms of biological role, catalyzes the condensation of pantoate with beta-alanine in an ATP-dependent reaction via a pantoyl-adenylate intermediate. This Nitrobacter hamburgensis (strain DSM 10229 / NCIMB 13809 / X14) protein is Pantothenate synthetase.